The sequence spans 155 residues: Small ribosomal subunit protein uS7c (155 aa).

This sequence belongs to the universal ribosomal protein uS7 family. In terms of assembly, part of the 30S ribosomal subunit.

Its subcellular location is the plastid. It is found in the chloroplast. One of the primary rRNA binding proteins, it binds directly to 16S rRNA where it nucleates assembly of the head domain of the 30S subunit. The protein is Small ribosomal subunit protein uS7c (rps7) of Cryptomeria japonica (Japanese cedar).